Consider the following 669-residue polypeptide: Alpha-1,4-glucan:maltose-1-phosphate maltosyltransferase 2 (669 aa).

The alpha-maltose 1-phosphate site is built by Lys-255, Gln-315, and Asp-350. Asp-385 serves as the catalytic Nucleophile. Asn-386 contacts alpha-maltose 1-phosphate. Glu-414 serves as the catalytic Proton donor. 525 to 526 (KY) serves as a coordination point for alpha-maltose 1-phosphate.

The protein belongs to the glycosyl hydrolase 13 family. GlgE subfamily. As to quaternary structure, homodimer.

The catalysed reaction is alpha-maltose 1-phosphate + [(1-&gt;4)-alpha-D-glucosyl](n) = [(1-&gt;4)-alpha-D-glucosyl](n+2) + phosphate. In terms of biological role, maltosyltransferase that uses maltose 1-phosphate (M1P) as the sugar donor to elongate linear or branched alpha-(1-&gt;4)-glucans. Maltooligosaccharides with a degree of polymerization (DP) superior or equal to 4 are efficient acceptors, with DP6 being optimal in the GlgE-catalyzed polymerization with M1P. Is probably involved in a branched alpha-glucan biosynthetic pathway from trehalose, together with TreS, Mak and GlgB. The polypeptide is Alpha-1,4-glucan:maltose-1-phosphate maltosyltransferase 2 (glgE2) (Streptomyces coelicolor (strain ATCC BAA-471 / A3(2) / M145)).